A 1307-amino-acid polypeptide reads, in one-letter code: Cyclic nucleotide-gated channel beta-1 (1307 aa).

6 disordered regions span residues 1-101 (MLGW…AQVA), 126-178 (QPVY…TEPS), 193-262 (LPQP…PGDP), 320-458 (DSCW…LDSC), 470-625 (LERA…SQNS), and 648-681 (EKLIDPDVTSDEESPKPSPAKKAPDSAPAQKPAE). Residues 1-720 (MLGWVQRVLP…SIDPLTNLMY (720 aa)) are Cytoplasmic-facing. The span at 43 to 59 (VQPEPEPEPEPAPEEAA) shows a compositional bias: acidic residues. Positions 165 to 174 (GSDKTSKTQD) are enriched in basic and acidic residues. Residues 361 to 386 (QEEEEEEKEEKEEKEEEEEKEEEEKR) are compositionally biased toward acidic residues. The span at 387–406 (EEEKKKEKEEEKKEKEKEEK) shows a compositional bias: basic and acidic residues. 2 stretches are compositionally biased toward acidic residues: residues 407–451 (EEKE…EEEP) and 483–518 (LPEEEEEKEEEKKEEEEEKEEEEEKEEEEEKEEEGE). Pro residues predominate over residues 550–560 (TIPPPERPPVS). A calmodulin-binding CaM1 region spans residues 621–631 (ASQNSAIINDR). The chain crosses the membrane as a helical span at residues 721-742 (ILWLFFVVLAWNWNCWLIPVRW). Residues 743–751 (AFPYQRADN) are Extracellular-facing. The helical transmembrane segment at 752-773 (IHLWLLMDYLCDFIYLLDITVF) threads the bilayer. Topologically, residues 774–788 (QMRLQFVKGGDIITD) are cytoplasmic. A helical transmembrane segment spans residues 789–808 (KKEMRNNYLKSQRFKMDLLC). The Extracellular portion of the chain corresponds to 809–824 (LLPLDFLYLKLGVNPL). The helical transmembrane segment at 825–837 (LRLPRCLKYMAFF) threads the bilayer. Residues 838–849 (EFNNRLEAILSK) lie on the Cytoplasmic side of the membrane. A helical transmembrane segment spans residues 850-872 (AYVYRVIRTTAYLLYSLHLNSCL). The ion conduction pathway stretch occupies residues 850 to 949 (AYVYRVIRTT…IGQMRDVVGA (100 aa)). Topologically, residues 873–895 (YYWASAFQGIGSTHWVYDGVGNS) are extracellular. A run of 2 helical transmembrane segments spans residues 896-922 (YIRCYYWAVKTLITIGGLPDPQTLFEI) and 923-948 (VFQLLNYFTGVFAFSVMIGQMRDVVG). The Cytoplasmic portion of the chain corresponds to 949 to 1307 (AATAGQTYYR…MLEEKKEEVE (359 aa)). The C-linker stretch occupies residues 952-1028 (AGQTYYRSCM…NIVSKVALFQ (77 aa)). The cNMP-binding domain stretch occupies residues 1026 to 1130 (LFQGCDRQMI…LDKKDLNEIL (105 aa)). The cyclic nucleotide-binding domain stretch occupies residues 1032 to 1148 (RQMIFDMLKR…LLRKKARRML (117 aa)). Residues Gly-1093, Glu-1094, Ser-1096, Arg-1106, and Thr-1107 each contribute to the 3',5'-cyclic GMP site. Residue Arg-1106 participates in 3',5'-cyclic AMP binding. Positions 1212–1218 (QQQLLEQ) are calmodulin-binding CaM2. The segment covering 1214 to 1238 (QLLEQAKSSQEAGGEEGSGATDQPA) has biased composition (low complexity). Residues 1214 to 1307 (QLLEQAKSSQ…MLEEKKEEVE (94 aa)) are disordered. Positions 1250–1261 (EPPAPSSPPPAS) are enriched in pro residues.

This sequence belongs to the cyclic nucleotide-gated cation channel (TC 1.A.1.5) family. CNGB1 subfamily. As to quaternary structure, the rod cyclic nucleotide-gated channel is a heterotetramer composed of CNGA1 and CNGB1 subunits with 3:1 stoichiometry. CNGA1:CNGB1 channel binds Ca(2+)-bound CALM1 via CaM1 and CaM2 regions of the CNGB1 subunit; this interaction modulates the affinity of the channel for cNMPs in response to intracellular Ca(2+) levels. In terms of assembly, the olfactory cyclic nucleotide-gated channel is a heterotetramer composed of CNGA2, CNGA4 and CNGB1b subunits with 2:1:1 stoichiometry. In terms of tissue distribution, expressed in olfactory sensory cilia (at protein level).

The protein localises to the cell projection. Its subcellular location is the cilium membrane. It catalyses the reaction Ca(2+)(in) = Ca(2+)(out). The enzyme catalyses Na(+)(in) = Na(+)(out). It carries out the reaction K(+)(in) = K(+)(out). The catalysed reaction is NH4(+)(in) = NH4(+)(out). It catalyses the reaction Rb(+)(in) = Rb(+)(out). The enzyme catalyses Li(+)(in) = Li(+)(out). It carries out the reaction Cs(+)(in) = Cs(+)(out). Functionally, pore-forming subunit of the rod cyclic nucleotide-gated channel. Mediates rod photoresponses at dim light converting transient changes in intracellular cGMP levels into electrical signals. In the dark, cGMP levels are high and keep the channel open enabling a steady inward current carried by Na(+) and Ca(2+) ions that leads to membrane depolarization and neurotransmitter release from synaptic terminals. Upon photon absorption cGMP levels decline leading to channel closure and membrane hyperpolarization that ultimately slows neurotransmitter release and signals the presence of light, the end point of the phototransduction cascade. Conducts cGMP- and cAMP-gated ion currents, with permeability for monovalent and divalent cations. The selectivity for Ca(2+) over Na(+) increases with cGMP concentrations, whereas the selectivity among monovalent ions is independent of the cGMP levels. In terms of biological role, pore-forming subunit of the olfactory cyclic nucleotide-gated channel. Operates in the cilia of olfactory sensory neurons where chemical stimulation of the odorant is converted to an electrical signal. Mediates odorant-induced cAMP-dependent Ca(2+) influx triggering neuron depolarization. The rise of intracellular Ca(2+) levels potentiates the olfactory response by activating Ca(2+)-dependent Cl(-) channels, but it also serves as a negative feedback signal to desensitize the channel for rapid adaptation to odorants. This chain is Cyclic nucleotide-gated channel beta-1, found in Rattus norvegicus (Rat).